The primary structure comprises 790 residues: Cadherin-18 (790 aa).

Residues 1 to 24 (MKITSTSCICPVLVCLCFVQRCYG) form the signal peptide. Positions 25–53 (TAHHSSIKVMRNQTKHIEGETEVHHRPKR) are excised as a propeptide. Asparagine 36 carries an N-linked (GlcNAc...) asparagine glycan. 5 Cadherin domains span residues 54 to 159 (GWVW…APKF), 160 to 268 (TDGP…PPRF), 269 to 383 (PQKH…PPLF), 384 to 486 (SMPS…DNPP), and 487 to 608 (ELAR…FLSS). Over 54–608 (GWVWNQFFVL…TCHAEAFLSS (555 aa)) the chain is Extracellular. N-linked (GlcNAc...) asparagine glycosylation occurs at asparagine 255. Asparagine 455 and asparagine 536 each carry an N-linked (GlcNAc...) asparagine glycan. Residues 609–636 (AGLSTGALIAILLCVLILLAIVVLFITL) form a helical membrane-spanning segment. Topologically, residues 637–790 (RRSKKEPLII…YGEIESERTT (154 aa)) are cytoplasmic. Serine 786 is subject to Phosphoserine.

It is found in the cell membrane. In terms of biological role, cadherins are calcium-dependent cell adhesion proteins. They preferentially interact with themselves in a homophilic manner in connecting cells; cadherins may thus contribute to the sorting of heterogeneous cell types. The protein is Cadherin-18 (CDH18) of Homo sapiens (Human).